Here is a 213-residue protein sequence, read N- to C-terminus: tRNA (guanine-N(7)-)-methyltransferase (213 aa).

Glu44, Glu69, Asp96, and Asp118 together coordinate S-adenosyl-L-methionine. Asp118 is an active-site residue. A substrate-binding site is contributed by Lys122. The interval 124–129 (RHEKRR) is interaction with RNA. Substrate contacts are provided by residues Asp154 and 191-194 (TEYE).

The protein belongs to the class I-like SAM-binding methyltransferase superfamily. TrmB family. In terms of assembly, homodimer.

It carries out the reaction guanosine(46) in tRNA + S-adenosyl-L-methionine = N(7)-methylguanosine(46) in tRNA + S-adenosyl-L-homocysteine. It functions in the pathway tRNA modification; N(7)-methylguanine-tRNA biosynthesis. Its function is as follows. Catalyzes the formation of N(7)-methylguanine at position 46 (m7G46) in tRNA. The sequence is that of tRNA (guanine-N(7)-)-methyltransferase from Bacillus subtilis (strain 168).